Here is a 312-residue protein sequence, read N- to C-terminus: Putative S-adenosyl-L-methionine-dependent methyltransferase Mjls_0078 (312 aa).

Residues Asp134 and 163–164 (DL) each bind S-adenosyl-L-methionine.

The protein belongs to the UPF0677 family.

In terms of biological role, exhibits S-adenosyl-L-methionine-dependent methyltransferase activity. The sequence is that of Putative S-adenosyl-L-methionine-dependent methyltransferase Mjls_0078 from Mycobacterium sp. (strain JLS).